Here is a 430-residue protein sequence, read N- to C-terminus: Adenylosuccinate synthetase (430 aa).

GTP is bound by residues 13–19 and 41–43; these read GDEGKGK and GHT. The Proton acceptor role is filled by aspartate 14. The Mg(2+) site is built by aspartate 14 and glycine 41. IMP-binding positions include 14–17, 39–42, threonine 130, arginine 144, glutamine 225, threonine 240, and arginine 304; these read DEGK and NAGH. The active-site Proton donor is histidine 42. 300–306 is a substrate binding site; the sequence is ASTGRPR. Residues arginine 306, 332 to 334, and 414 to 416 each bind GTP; these read KLD and STG.

This sequence belongs to the adenylosuccinate synthetase family. Homodimer. Mg(2+) serves as cofactor.

Its subcellular location is the cytoplasm. The enzyme catalyses IMP + L-aspartate + GTP = N(6)-(1,2-dicarboxyethyl)-AMP + GDP + phosphate + 2 H(+). It functions in the pathway purine metabolism; AMP biosynthesis via de novo pathway; AMP from IMP: step 1/2. Its function is as follows. Plays an important role in the de novo pathway of purine nucleotide biosynthesis. Catalyzes the first committed step in the biosynthesis of AMP from IMP. The polypeptide is Adenylosuccinate synthetase (Stenotrophomonas maltophilia (strain R551-3)).